Reading from the N-terminus, the 381-residue chain is MIIHVFTSESVSEGHPDKIADQISDAILDAILAKDPLARVACETFVKTGMVLVGGEITTSAWVDVETITREVIKDIGYNSSDMGFDWASCSVLSAIGKQSLDIAQGVDNRETKILGAGDQGLMFGYASRETDVCMPAPIAYSHRLMARQAELRKNNKLPWLRPDGKCQLTLKYDQGKPVAIDTIVFSTQHAPEISHKDLVEAVREEIIKPVLPEEWLSAATRYYINPTGRFVIGGPLGDCGLTGRKIIVDTYGGMARHGGGCFSGKDPSKVDRSGAYAARHVAKNLVAAGIAEKCEIQVSYAIGVAEPTSISVDTFGTGHLRNNVIIDLIKTHFDLTPQGIIDHHDLFSPIYRQTAAYGHYGRDGLPWERLDKVAALAKAL.

H15 serves as a coordination point for ATP. D17 serves as a coordination point for Mg(2+). Residue E43 coordinates K(+). E56 and Q99 together coordinate L-methionine. Residues 99 to 109 (QSLDIAQGVDN) are flexible loop. ATP is bound by residues 164-166 (DGK), 230-231 (RF), D239, 245-246 (RK), and K266. D239 provides a ligand contact to L-methionine. K270 is a binding site for L-methionine.

The protein belongs to the AdoMet synthase family. As to quaternary structure, homotetramer; dimer of dimers. It depends on Mg(2+) as a cofactor. The cofactor is K(+).

It is found in the cytoplasm. The catalysed reaction is L-methionine + ATP + H2O = S-adenosyl-L-methionine + phosphate + diphosphate. The protein operates within amino-acid biosynthesis; S-adenosyl-L-methionine biosynthesis; S-adenosyl-L-methionine from L-methionine: step 1/1. Its function is as follows. Catalyzes the formation of S-adenosylmethionine (AdoMet) from methionine and ATP. The overall synthetic reaction is composed of two sequential steps, AdoMet formation and the subsequent tripolyphosphate hydrolysis which occurs prior to release of AdoMet from the enzyme. The chain is S-adenosylmethionine synthase from Legionella jeonii.